Reading from the N-terminus, the 260-residue chain is Putative imidazole glycerol phosphate synthase subunit hisF3 (260 aa).

The active site involves D135.

It belongs to the HisA/HisF family. Heterodimer of HisH and HisF.

It is found in the cytoplasm. It carries out the reaction 5-[(5-phospho-1-deoxy-D-ribulos-1-ylimino)methylamino]-1-(5-phospho-beta-D-ribosyl)imidazole-4-carboxamide + L-glutamine = D-erythro-1-(imidazol-4-yl)glycerol 3-phosphate + 5-amino-1-(5-phospho-beta-D-ribosyl)imidazole-4-carboxamide + L-glutamate + H(+). Its pathway is amino-acid biosynthesis; L-histidine biosynthesis; L-histidine from 5-phospho-alpha-D-ribose 1-diphosphate: step 5/9. In terms of biological role, IGPS catalyzes the conversion of PRFAR and glutamine to IGP, AICAR and glutamate. The HisF subunit catalyzes the cyclization activity that produces IGP and AICAR from PRFAR using the ammonia provided by the HisH subunit. In Vibrio vulnificus (strain YJ016), this protein is Putative imidazole glycerol phosphate synthase subunit hisF3 (hisF3).